The following is a 497-amino-acid chain: 3-octaprenyl-4-hydroxybenzoate carboxy-lyase (497 aa).

Asparagine 175 contacts Mn(2+). Prenylated FMN contacts are provided by residues 178–180 (IYR), 192–194 (RWL), and 197–198 (RG). Glutamate 241 provides a ligand contact to Mn(2+). Aspartate 290 functions as the Proton donor in the catalytic mechanism.

The protein belongs to the UbiD family. As to quaternary structure, homohexamer. Requires prenylated FMN as cofactor. The cofactor is Mn(2+).

It localises to the cell membrane. It carries out the reaction a 4-hydroxy-3-(all-trans-polyprenyl)benzoate + H(+) = a 2-(all-trans-polyprenyl)phenol + CO2. It participates in cofactor biosynthesis; ubiquinone biosynthesis. Its function is as follows. Catalyzes the decarboxylation of 3-octaprenyl-4-hydroxy benzoate to 2-octaprenylphenol, an intermediate step in ubiquinone biosynthesis. The sequence is that of 3-octaprenyl-4-hydroxybenzoate carboxy-lyase from Shigella sonnei (strain Ss046).